A 369-amino-acid polypeptide reads, in one-letter code: F-box protein At3g08750 (369 aa).

The 48-residue stretch at 6–53 folds into the F-box domain; that stretch reads CLLLPSLPFELIEEILYKIPAESLIRFKSTCKKWYNLITEKRFMYNHL.

This is F-box protein At3g08750 from Arabidopsis thaliana (Mouse-ear cress).